Reading from the N-terminus, the 348-residue chain is Dihydroorotase (348 aa).

Zn(2+) is bound by residues histidine 14 and histidine 16. Residues 16–18 (HLR) and asparagine 42 contribute to the substrate site. 3 residues coordinate Zn(2+): lysine 100, histidine 137, and histidine 175. Lysine 100 carries the post-translational modification N6-carboxylysine. Substrate is bound at residue histidine 137. Substrate is bound at residue leucine 220. Aspartate 248 serves as a coordination point for Zn(2+). The active site involves aspartate 248. Histidine 252 and alanine 264 together coordinate substrate.

It belongs to the metallo-dependent hydrolases superfamily. DHOase family. Class II DHOase subfamily. In terms of assembly, homodimer. Zn(2+) is required as a cofactor.

It catalyses the reaction (S)-dihydroorotate + H2O = N-carbamoyl-L-aspartate + H(+). It participates in pyrimidine metabolism; UMP biosynthesis via de novo pathway; (S)-dihydroorotate from bicarbonate: step 3/3. Its function is as follows. Catalyzes the reversible cyclization of carbamoyl aspartate to dihydroorotate. The protein is Dihydroorotase of Pseudomonas putida (strain W619).